The primary structure comprises 533 residues: Adenine deaminase (533 aa).

It belongs to the metallo-dependent hydrolases superfamily. Adenine deaminase family. The cofactor is Mn(2+).

The catalysed reaction is adenine + H2O + H(+) = hypoxanthine + NH4(+). The chain is Adenine deaminase from Sulfurovum sp. (strain NBC37-1).